We begin with the raw amino-acid sequence, 150 residues long: Avidin-related protein 1 (150 aa).

A signal peptide spans 1-24 (MVHATSPLLLLLLLSLALVAPGLS). The Avidin-like domain maps to 26–147 (RKCSLTGKWD…GNNDFTRQRT (122 aa)). A disulfide bridge connects residues C28 and C105. Residues N36 and S40 each coordinate biotin. N-linked (GlcNAc...) asparagine glycosylation is present at N54. The biotin site is built by Y57, T59, and D63. Residues N67 and N93 are each glycosylated (N-linked (GlcNAc...) asparagine). Biotin contacts are provided by S95, S99, and N140.

It belongs to the avidin/streptavidin family. Homotetramer. Post-translationally, glycosylated.

The protein localises to the secreted. In terms of biological role, forms a strong non-covalent specific complex with biotin. The protein is Avidin-related protein 1 (AVR1) of Gallus gallus (Chicken).